The following is a 110-amino-acid chain: DNA-binding protein PAE3044 (110 aa).

This sequence belongs to the PDCD5 family.

The polypeptide is DNA-binding protein PAE3044 (Pyrobaculum aerophilum (strain ATCC 51768 / DSM 7523 / JCM 9630 / CIP 104966 / NBRC 100827 / IM2)).